The following is a 627-amino-acid chain: Putative polyketide hydroxylase (627 aa).

FAD is bound by residues Pro-22–Arg-51 and Tyr-309–Asp-319. Residues Ala-370–Gln-469 are disordered. Positions Ala-395 to Gln-469 are enriched in gly residues.

It belongs to the PheA/TfdB FAD monooxygenase family. Requires FAD as cofactor.

Involved in developmentally regulated synthesis of a compound biosynthetically related to polyketide antibiotics which is essential for spore color in Streptococcus coelicolor. The sequence is that of Putative polyketide hydroxylase from Streptomyces coelicolor (strain ATCC BAA-471 / A3(2) / M145).